Reading from the N-terminus, the 990-residue chain is Sister chromatid cohesion protein PDS5 homolog E (990 aa).

HEAT repeat units lie at residues 31–57, 58–96, 153–190, 191–228, and 232–269; these read DATL…SVQK, ALHP…ITAP, DLVL…DESE, EVPM…SCTC, and PCIM…HNDV. The disordered stretch occupies residues 262 to 565; the sequence is TTQAHNDVKP…AGEEVESNTN (304 aa). Basic and acidic residues predominate over residues 267–281; the sequence is NDVKPKDNEADEKIS. The span at 302–314 shows a compositional bias: basic residues; sequence KGTRSKRSARGGT. Composition is skewed to polar residues over residues 328-342 and 394-410; these read EGLS…ASGS and VGQT…SSGR. 3 stretches are compositionally biased toward basic and acidic residues: residues 421-430, 448-477, and 503-512; these read TKMEETDHDV, PAKE…EKAD, and VHSDAKKKNS. The Nuclear localization signal 1 signature appears at 458–465; sequence VKKHEDGI. Short sequence motifs (nuclear localization signal) lie at residues 539–546 and 583–590; these read TKKSEQAP and DKKFYEGV. The interval 653-966 is disordered; the sequence is KKRKIVSKNV…VGNEAEEDDQ (314 aa). Residues 662 to 673 show a composition bias toward low complexity; it reads VEPSSSPEVRSS. 2 consecutive short sequence motifs (nuclear localization signal) follow at residues 677 to 684 and 715 to 722; these read MKKKDSVT and LKKLNGEP. Residues 727 to 742 are compositionally biased toward basic residues; the sequence is GRTGKKQKVTQAMHRK. Over residues 746-760 the composition is skewed to acidic residues; sequence DCDEQEDLETKDEED. Basic and acidic residues-rich tracts occupy residues 761–810, 819–890, and 898–947; these read SLKL…KTNG, TDGK…KETN, and EEQK…DKET.

This sequence belongs to the PDS5 family. Interacts with the cohesin complex.

It localises to the nucleus. Functionally, cohesin cofactor dispensable during the meiotic division but playing an important role in DNA repair by homologous recombination (HR) probably by helping SMC5/SMC6 complex. Regulator of sister chromatid cohesion in mitosis which may stabilize cohesin complex association with chromatin. May couple sister chromatid cohesion during mitosis to DNA replication. Cohesion ensures that chromosome partitioning is accurate in both meiotic and mitotic cells and plays an important role in DNA repair. The protein is Sister chromatid cohesion protein PDS5 homolog E of Arabidopsis thaliana (Mouse-ear cress).